The following is a 496-amino-acid chain: Catalase isozyme 3 (496 aa).

The tract at residues 1-25 is disordered; it reads MTMDPTKFRPSSSHDTTVTTTNAGA. Positions 9-23 are enriched in polar residues; the sequence is RPSSSHDTTVTTTNA. Catalysis depends on residues H67 and N140. Residue Y351 participates in heme binding. The interval 402-422 is disordered; sequence PLRQAAPPTPLPPRPVAGRRE.

Belongs to the catalase family. In terms of assembly, homotetramer. The cofactor is heme. In terms of tissue distribution, leaf mesophyll cells, pericarp, seedling roots and the coleoptile.

Its subcellular location is the mitochondrion. It catalyses the reaction 2 H2O2 = O2 + 2 H2O. In terms of biological role, occurs in almost all aerobically respiring organisms and serves to protect cells from the toxic effects of hydrogen peroxide. Its levels are highest in the light period and are lowest in the dark period, hence it may be important for scavenging hydrogen peroxide at night, rather than during the day. This chain is Catalase isozyme 3 (CAT3), found in Zea mays (Maize).